We begin with the raw amino-acid sequence, 1207 residues long: MVDVNRFKSMQITLASPSKVRSWSYGEVKKPETINYRTLKPEREGLFDEVIFGPTKDWECACGKYKRIRYKGIVCDRCGVEVTRAKVRRERMGHIELKAPVSHIWYFKGIPSRMGLTLDMSPRALEEVIYFAAYVVIDPKDTPLEPKSLLTEREYREKLQEYGHGSFVAKMGAEAIQDLLKRVDLAAEIAELKEELKSASGQKRIKAVRRLDVLDAFNKSGNKPEWMVLNILPVIPPDLRPMVQLDGGRFAASDLNDLYRRVINRNNRLARLLELNAPGIIVQNEKRMLQEAVDALIDNGRRGRPITGPGSRPLKSLSHMLKGKQGRFRQNLLGKRVDFSGRSVIAVGPTLKMYQCGVPREMAIELFKPFVMREIVAKEYAGNVKAAKRMVERGDERIWDILEEVIKEHPVLLNRAPTLHRLGIQAFEPVLIDGKALRLHPLVCEAYNADFDGDQMAIHVPLSEEAQAEARLLMLAAEHILNPKDGKPVVTPSQDMVLGNYYLTMEDAGREGEGMIFKDKDEAVMAYRNGYAHLHSRVGIAVDSMPNKPWKDSQRHKIMVTTVGKILFNDIMPEDLPYLQEPNNANLTEGTPDKYFLEPGQDIQEVIDGLDINVPFKKKNLGNIIAETFKRFRTTETSAFLDRLKDLGYYHSTLAGLTVGIADIPVIDNKAEIIDAAHHRVEEINKAFRRGLMTDDDRYVAVTTTWREAKEALEKRLIETQDPKNPIVMMMDSGARGNISNFSQLAGMRGLMAAPNGRIMELPILSNFREGLSVLEMFFSTHGARKGMTDTALKTADSGYLTRRLVDVAQDVIIREDDCGTDRGLLIRAITDGKEVTETLEERLQGRYTRKSVKHPETGEVLIGADQLITEDMARKIVDAGVEEVTIRSVFTCATRHGVCRHCYGINLATGDAVEVGEAVGTIAAQSIGEPGTQLTMRTFHTGGVASNTDITQGLPRIQEIFEARNPKGEAVITEVKGNVVEIEEDASTRTKKVYVQGKTGMGEYVVPFTARMKVEVGDEVNRGAALTEGSIQPKRLLEVRDTLSVETYLLAEVQKVYRSQGVEIGDKHVEVMVRQMLRKVRVMDPGDTDLLPGTLMDISDFTDANKDIVISGGIPATSRPVLMGITKASLETNSFLSAASFQETTRVLTDAAIRGKKDHLLGLKENVIIGKIIPAGTGMARYRNIEPQAMNEIEVIDHTEVSAEAE.

Positions 60, 62, 75, and 78 each coordinate Zn(2+). Residues aspartate 450, aspartate 452, and aspartate 454 each contribute to the Mg(2+) site. Cysteine 819, cysteine 893, cysteine 900, and cysteine 903 together coordinate Zn(2+).

Belongs to the RNA polymerase beta' chain family. As to quaternary structure, the RNAP catalytic core consists of 2 alpha, 1 beta, 1 beta' and 1 omega subunit. When a sigma factor is associated with the core the holoenzyme is formed, which can initiate transcription. It depends on Mg(2+) as a cofactor. The cofactor is Zn(2+).

It catalyses the reaction RNA(n) + a ribonucleoside 5'-triphosphate = RNA(n+1) + diphosphate. Its function is as follows. DNA-dependent RNA polymerase catalyzes the transcription of DNA into RNA using the four ribonucleoside triphosphates as substrates. The polypeptide is DNA-directed RNA polymerase subunit beta' (Streptococcus pyogenes serotype M12 (strain MGAS2096)).